Reading from the N-terminus, the 528-residue chain is Oxamate amidohydrolase proenzyme (528 aa).

T342 (nucleophile) is an active-site residue. Position 424-425 (424-425) interacts with substrate; sequence GG.

Belongs to the gamma-glutamyltransferase family. In terms of assembly, heterodimer that consists of a 35.5 kDa large (alpha) subunit and a 20 kDa small (beta) subunit, which are synthesized from a single polypeptide. Post-translationally, cleaved by autocatalysis into a large (alpha) and a small (beta) subunit.

It carries out the reaction oxamate + H2O = oxalate + NH4(+). Functionally, involved in the uric acid degradation pathway. Catalyzes the conversion of oxamate to oxalate. In Klebsiella pneumoniae subsp. pneumoniae (strain ATCC 700721 / MGH 78578), this protein is Oxamate amidohydrolase proenzyme.